We begin with the raw amino-acid sequence, 501 residues long: Endoglucanase 1 (501 aa).

An N-terminal signal peptide occupies residues 1–29 (MALYLSSSRLITFLSFILLLSNGFSSSSS). Aspartate 96 functions as the Nucleophile in the catalytic mechanism. Catalysis depends on residues histidine 422, aspartate 473, and glutamate 482.

The protein belongs to the glycosyl hydrolase 9 (cellulase E) family.

The protein localises to the secreted. The enzyme catalyses Endohydrolysis of (1-&gt;4)-beta-D-glucosidic linkages in cellulose, lichenin and cereal beta-D-glucans.. In Arabidopsis thaliana (Mouse-ear cress), this protein is Endoglucanase 1 (CEL2).